The sequence spans 478 residues: 3-isopropylmalate dehydratase large subunit (478 aa).

Positions 359, 417, and 420 each coordinate [4Fe-4S] cluster.

It belongs to the aconitase/IPM isomerase family. LeuC type 1 subfamily. Heterodimer of LeuC and LeuD. Requires [4Fe-4S] cluster as cofactor.

It carries out the reaction (2R,3S)-3-isopropylmalate = (2S)-2-isopropylmalate. It functions in the pathway amino-acid biosynthesis; L-leucine biosynthesis; L-leucine from 3-methyl-2-oxobutanoate: step 2/4. Catalyzes the isomerization between 2-isopropylmalate and 3-isopropylmalate, via the formation of 2-isopropylmaleate. This Anaeromyxobacter sp. (strain Fw109-5) protein is 3-isopropylmalate dehydratase large subunit.